The following is a 557-amino-acid chain: Membrane protein insertase YidC (557 aa).

3 helical membrane-spanning segments follow: residues 371-391, 437-457, and 515-535; these read WGWS…PLSA, LGGC…YWVL, and PIVF…YWVV.

This sequence belongs to the OXA1/ALB3/YidC family. Type 1 subfamily. As to quaternary structure, interacts with the Sec translocase complex via SecD. Specifically interacts with transmembrane segments of nascent integral membrane proteins during membrane integration.

It is found in the cell inner membrane. Required for the insertion and/or proper folding and/or complex formation of integral membrane proteins into the membrane. Involved in integration of membrane proteins that insert both dependently and independently of the Sec translocase complex, as well as at least some lipoproteins. Aids folding of multispanning membrane proteins. The polypeptide is Membrane protein insertase YidC (Polynucleobacter necessarius subsp. necessarius (strain STIR1)).